Consider the following 186-residue polypeptide: Glutathione peroxidase 7 (186 aa).

Residues 1–18 (MVAAVATAWLLLWAAACA) form the signal peptide. Residue Cys56 is part of the active site.

This sequence belongs to the glutathione peroxidase family.

The protein localises to the secreted. The catalysed reaction is 2 glutathione + H2O2 = glutathione disulfide + 2 H2O. Functionally, it protects esophageal epithelia from hydrogen peroxide-induced oxidative stress. It suppresses acidic bile acid-induced reactive oxygen species (ROS) and protects against oxidative DNA damage and double-strand breaks. The polypeptide is Glutathione peroxidase 7 (Gpx7) (Mus musculus (Mouse)).